A 159-amino-acid polypeptide reads, in one-letter code: uncharacterized protein (159 aa).

The region spanning 1–139 (MNIIPTCQVP…TARKMKPEIP (139 aa)) is the N-acetyltransferase domain.

This is an uncharacterized protein from Bacillus subtilis (strain 168).